Consider the following 318-residue polypeptide: Aldehyde oxidoreductase FAD-binding subunit PaoB (318 aa).

Positions 1–223 (MKAFTYERVN…VAVTLPPPLG (223 aa)) constitute an FAD-binding PCMH-type domain. FAD is bound by residues 26–34 (KFIAGGTNL) and Thr-108. Residues Cys-119, Cys-129, Cys-138, and Cys-157 each coordinate [4Fe-4S] cluster. FAD is bound by residues Asp-164, Ile-213, and Lys-230.

As to quaternary structure, heterotrimer composed of PaoA, PaoB and PaoC. The cofactor is FAD. [4Fe-4S] cluster is required as a cofactor.

The protein resides in the periplasm. It catalyses the reaction an aldehyde + A + H2O = a carboxylate + AH2 + H(+). Its activity is regulated as follows. The complex requires PaoD for activity. Functionally, oxidizes aldehydes to the corresponding carboxylic acids with a preference for aromatic aldehydes. It might play a role in the detoxification of aldehydes to avoid cell damage. This chain is Aldehyde oxidoreductase FAD-binding subunit PaoB, found in Escherichia coli (strain K12).